We begin with the raw amino-acid sequence, 310 residues long: Probable mitochondrial import receptor subunit TOM40-2 (310 aa).

Methionine 1 is subject to N-acetylmethionine.

This sequence belongs to the Tom40 family. In terms of assembly, forms part of the preprotein translocase complex of the outer mitochondrial membrane (TOM complex) which consists of at least 6 different proteins (TOM5, TOM6, TOM7, TOM20, TOM22/TOM9 and TOM40). Present in a large lipid-enriched complex called mitochondrial transmembrane lipoprotein (MTL) complex made of proteins located in the two mitochondrial membranes, including the TOM complex and the core components of the MICOS complex and containing at least digalactosyldiacylglycerol (DGDG). Binds to MIC60. Component of a mitochondrial large protein complex that contains, at least, MIC60, DGS1, TOM40, TOM20 proteins, and petC/RISP. Expressed in roots, flowers, young cotyledons and leaves.

The protein localises to the mitochondrion outer membrane. Functionally, central component of the receptor complex responsible for the recognition and translocation of cytosolically synthesized mitochondrial preproteins. Together with TOM22 functions as the transit peptide receptor at the surface of the mitochondrion outer membrane and facilitates the movement of preproteins into the translocation pore. Directly involved in the pore formation. The polypeptide is Probable mitochondrial import receptor subunit TOM40-2 (Arabidopsis thaliana (Mouse-ear cress)).